The sequence spans 614 residues: V-type proton ATPase catalytic subunit A isoform 2 (614 aa).

Ser-142 bears the Phosphoserine mark. 247-254 (GAFGCGKT) lines the ATP pocket.

The protein belongs to the ATPase alpha/beta chains family. As to quaternary structure, V-ATPase is a heteromultimeric enzyme made up of two complexes: the ATP-hydrolytic V1 complex and the proton translocation V0 complex. The V1 complex consists of three catalytic AB heterodimers that form a heterohexamer, three peripheral stalks each consisting of EG heterodimers, one central rotor including subunits D and F, and the regulatory subunits C and H. The proton translocation complex V0 consists of the proton transport subunit a, a ring of proteolipid subunits c9c'', rotary subunit d, subunits e and f, and the accessory subunits VhaAC45 and ATP6AP2.

The enzyme catalyses ATP + H2O + 4 H(+)(in) = ADP + phosphate + 5 H(+)(out). With respect to regulation, ATP hydrolysis occurs at the interface between the nucleotide-binding domains of subunits A and B. ATP hydrolysis triggers a conformational change in the subunits D and F, which induces a shift of subunit d. The c-ring is subsequently rotated and results in a continuous proton translocation across the membrane. In terms of biological role, catalytic subunit of the V1 complex of vacuolar(H+)-ATPase (V-ATPase), a multisubunit enzyme composed of a peripheral complex (V1) that hydrolyzes ATP and a membrane integral complex (V0) that translocates protons. V-ATPase is responsible for acidifying and maintaining the pH of intracellular compartments and in some cell types, is targeted to the plasma membrane, where it is responsible for acidifying the extracellular environment. The sequence is that of V-type proton ATPase catalytic subunit A isoform 2 (Vha68-2) from Drosophila melanogaster (Fruit fly).